Reading from the N-terminus, the 105-residue chain is Large ribosomal subunit protein uL24 (105 aa).

The protein belongs to the universal ribosomal protein uL24 family. As to quaternary structure, part of the 50S ribosomal subunit.

Functionally, one of two assembly initiator proteins, it binds directly to the 5'-end of the 23S rRNA, where it nucleates assembly of the 50S subunit. One of the proteins that surrounds the polypeptide exit tunnel on the outside of the subunit. This chain is Large ribosomal subunit protein uL24, found in Vibrio atlanticus (strain LGP32) (Vibrio splendidus (strain Mel32)).